The sequence spans 590 residues: Aspartate--tRNA(Asp/Asn) ligase (590 aa).

Glu170 lines the L-aspartate pocket. An aspartate region spans residues 194 to 197 (QLFK). Position 216 (Arg216) interacts with L-aspartate. ATP-binding positions include 216–218 (RDE) and Gln225. His448 serves as a coordination point for L-aspartate. Glu482 is a binding site for ATP. Arg489 contacts L-aspartate. Residue 534-537 (GWDR) coordinates ATP. Residues 559 to 590 (GGVDPLTEAPAPITAQQRKESGIDAKPGKDGA) form a disordered region. Positions 575 to 590 (QRKESGIDAKPGKDGA) are enriched in basic and acidic residues.

Belongs to the class-II aminoacyl-tRNA synthetase family. Type 1 subfamily. Homodimer.

Its subcellular location is the cytoplasm. The catalysed reaction is tRNA(Asx) + L-aspartate + ATP = L-aspartyl-tRNA(Asx) + AMP + diphosphate. Aspartyl-tRNA synthetase with relaxed tRNA specificity since it is able to aspartylate not only its cognate tRNA(Asp) but also tRNA(Asn). Reaction proceeds in two steps: L-aspartate is first activated by ATP to form Asp-AMP and then transferred to the acceptor end of tRNA(Asp/Asn). The sequence is that of Aspartate--tRNA(Asp/Asn) ligase from Mycolicibacterium gilvum (strain PYR-GCK) (Mycobacterium gilvum (strain PYR-GCK)).